Here is an 821-residue protein sequence, read N- to C-terminus: MILPMSSACLGQFLRASPRGMIEQFNRAPPLRVSIRGAAGVEKSLGLGRNAGSQQGMQKNQLQDKIRKQLREVQLSPSSYDTAWVAMVPVQGSHQTPRFPQCIEWIMQNQHDDGSWGTNLPGSVVNKDILLCTLACVVALKRWNTGRDHISRGLNFIGKNFWVAMDEQTIAPVGFNITFSGLLNLATGTGLEFPVMQTDIDGIFHMRKIELERDAYGTASSRRAFMAYVSEGLDSLQDWDQVMAYQRKNRSIFNSPSATAATVIHGHNDSALCYLDSLVSKLHGPVPVMYPQNAYSQLCMVDTLEKMGISNNFSCEISDILDMIYRLWIHNEEELMLEMGTCAMAFRLLRMHGYDISSDGMAQFVEQSSFDDSIHGYLNDTKALLELYRSSQIRCLEDDLILQDIGSWSARVLQEKISSKMTHKSEMLGVEYALKFPVYATLERLEQKRNIEQFKTKEQLKIEGFKLLKSGYRGAITHDEILALAVDEFHSSQSVYQQELQDLNSWVAHTRLDELKFARLMPSITYFSAAATMFPSELSEARIAWTQNCILTTTVDDFFDGDGSKEEMENLVKLIKKWDGHGEIGFSSECVEILFYAIYNTSKQIAEKAVPLQKRNVVDHIAESWWFTVRGMLTEAEWRMDKYVPTTVEEYMSAAVDSFAVGPIITSAALFVGPELSEEVFRSEEYIHLMNLANTIGRLLNDMQTYEKEIKMGKVNSIMLHALSHSGGGRGSPEASMEEAKREMRRVLQGSRCDLLRLVTRDGGVVPPPCRKLFWFMSKVLHFVYMEKDGYFTADGMMASANAVILDPLQVTLLPSGLGTL.

Positions 556, 560, 701, 705, and 709 each coordinate Mg(2+). The DDXXD motif signature appears at 556–560; it reads DDFFD.

It belongs to the terpene synthase family. It depends on Mg(2+) as a cofactor.

The catalysed reaction is ent-copalyl diphosphate = ent-isokaurene + diphosphate. The protein operates within secondary metabolite biosynthesis; terpenoid biosynthesis. In terms of biological role, involved in the biosynthesis of ent-kaurene diterpenoids natural products. Catalyzes the conversion of ent-copalyl diphosphate to the phytoalexin precursor ent-isokaur-15-ene. The chain is Ent-isokaur-15-ene synthase from Oryza sativa subsp. indica (Rice).